A 280-amino-acid chain; its full sequence is Fructose-1,6-bisphosphatase class 1 (280 aa).

Positions 64, 83, 85, and 86 each coordinate Mg(2+). Residues 86-89 (DGSS), Tyr-189, and Lys-220 each bind substrate. Glu-226 serves as a coordination point for Mg(2+).

Belongs to the FBPase class 1 family. Homotetramer. Mg(2+) is required as a cofactor.

The protein localises to the cytoplasm. It carries out the reaction beta-D-fructose 1,6-bisphosphate + H2O = beta-D-fructose 6-phosphate + phosphate. The protein operates within carbohydrate biosynthesis; gluconeogenesis. This chain is Fructose-1,6-bisphosphatase class 1, found in Campylobacter jejuni subsp. jejuni serotype O:6 (strain 81116 / NCTC 11828).